Consider the following 221-residue polypeptide: MTYPERKAFVSRITNETKIQIAISLNGGPISIENSILQREESDAAKQVTGSQIIDIQTGVGFLDHMIHALAKHSGWSLIVECIGDLHIDDHHTTEDCGIALGQAFKEALGHVRGVKRFGSGYAPLDEALSRAVVDLSNRPYAVIELGLKREKIGDLSCEMIPHFLESFAEAARITLHVDCLRGFNDHHRSESAFKALAIAIKEAISSNGTNDVPSTKGVLM.

Belongs to the imidazoleglycerol-phosphate dehydratase family.

It catalyses the reaction D-erythro-1-(imidazol-4-yl)glycerol 3-phosphate = 3-(imidazol-4-yl)-2-oxopropyl phosphate + H2O. It participates in amino-acid biosynthesis; L-histidine biosynthesis; L-histidine from 5-phospho-alpha-D-ribose 1-diphosphate: step 6/9. In Kluyveromyces lactis (strain ATCC 8585 / CBS 2359 / DSM 70799 / NBRC 1267 / NRRL Y-1140 / WM37) (Yeast), this protein is Imidazoleglycerol-phosphate dehydratase (HIS3).